A 236-amino-acid chain; its full sequence is uncharacterized protein (236 aa).

The 68-residue stretch at 7 to 74 (RTNRRDIYLK…PKIGSFVSRV (68 aa)) folds into the HTH gntR-type domain. The H-T-H motif DNA-binding region spans 34-53 (ENELAASMGVSRTPVRESLI).

This is an uncharacterized protein from Streptomyces ambofaciens.